The primary structure comprises 502 residues: L-arabinose isomerase (502 aa).

Positions 306, 333, 350, and 449 each coordinate Mn(2+).

This sequence belongs to the arabinose isomerase family. Requires Mn(2+) as cofactor.

The catalysed reaction is beta-L-arabinopyranose = L-ribulose. It functions in the pathway carbohydrate degradation; L-arabinose degradation via L-ribulose; D-xylulose 5-phosphate from L-arabinose (bacterial route): step 1/3. Its function is as follows. Catalyzes the conversion of L-arabinose to L-ribulose. The chain is L-arabinose isomerase from Flavobacterium johnsoniae (strain ATCC 17061 / DSM 2064 / JCM 8514 / BCRC 14874 / CCUG 350202 / NBRC 14942 / NCIMB 11054 / UW101) (Cytophaga johnsonae).